Reading from the N-terminus, the 205-residue chain is Probable nicotinate-nucleotide adenylyltransferase (205 aa).

The protein belongs to the NadD family.

The catalysed reaction is nicotinate beta-D-ribonucleotide + ATP + H(+) = deamido-NAD(+) + diphosphate. Its pathway is cofactor biosynthesis; NAD(+) biosynthesis; deamido-NAD(+) from nicotinate D-ribonucleotide: step 1/1. Catalyzes the reversible adenylation of nicotinate mononucleotide (NaMN) to nicotinic acid adenine dinucleotide (NaAD). This chain is Probable nicotinate-nucleotide adenylyltransferase, found in Arthrobacter sp. (strain FB24).